The chain runs to 672 residues: DNA ligase (672 aa).

NAD(+)-binding positions include 35 to 39 (DAQYD), 84 to 85 (SL), and Glu-115. Lys-117 functions as the N6-AMP-lysine intermediate in the catalytic mechanism. Residues Arg-138, Glu-178, Lys-294, and Lys-318 each contribute to the NAD(+) site. Residues Cys-412, Cys-415, Cys-430, and Cys-435 each contribute to the Zn(2+) site. The 81-residue stretch at 592 to 672 (ATGGPFVGKS…AFLQMLQTNA (81 aa)) folds into the BRCT domain.

The protein belongs to the NAD-dependent DNA ligase family. LigA subfamily. The cofactor is Mg(2+). Mn(2+) serves as cofactor.

The catalysed reaction is NAD(+) + (deoxyribonucleotide)n-3'-hydroxyl + 5'-phospho-(deoxyribonucleotide)m = (deoxyribonucleotide)n+m + AMP + beta-nicotinamide D-nucleotide.. Functionally, DNA ligase that catalyzes the formation of phosphodiester linkages between 5'-phosphoryl and 3'-hydroxyl groups in double-stranded DNA using NAD as a coenzyme and as the energy source for the reaction. It is essential for DNA replication and repair of damaged DNA. This Myxococcus xanthus (strain DK1622) protein is DNA ligase.